The sequence spans 132 residues: Small ribosomal subunit protein uS8 (132 aa).

The protein belongs to the universal ribosomal protein uS8 family. As to quaternary structure, part of the 30S ribosomal subunit. Contacts proteins S5 and S12.

Its function is as follows. One of the primary rRNA binding proteins, it binds directly to 16S rRNA central domain where it helps coordinate assembly of the platform of the 30S subunit. This Geobacillus sp. (strain WCH70) protein is Small ribosomal subunit protein uS8.